Reading from the N-terminus, the 603-residue chain is Probable methyltransferase PMT20 (603 aa).

At 1 to 16 (MKSGKQSSQPEKGTSR) the chain is on the cytoplasmic side. The chain crosses the membrane as a helical; Signal-anchor for type II membrane protein span at residues 17–37 (ILSLTVLFIAFCGFSFYLGGI). Over 38 to 603 (FCSERDKIVA…KLWFSSNQTS (566 aa)) the chain is Lumenal. N-linked (GlcNAc...) asparagine glycosylation is found at Asn-313 and Asn-600.

The protein belongs to the methyltransferase superfamily.

The protein localises to the golgi apparatus membrane. This chain is Probable methyltransferase PMT20, found in Arabidopsis thaliana (Mouse-ear cress).